A 115-amino-acid polypeptide reads, in one-letter code: Mediator of RNA polymerase II transcription subunit 9 (115 aa).

Residues 1–31 (MATGGTVRPAEEPEEEEEEEDEAVEEEEEED) form a disordered region. The span at 12-31 (EPEEEEEEEDEAVEEEEEED) shows a compositional bias: acidic residues. A coiled-coil region spans residues 31–107 (DYTFLPLVHD…SELLQKYKSL (77 aa)).

It belongs to the Mediator complex subunit 9 family. In terms of assembly, component of the Mediator complex.

The protein localises to the nucleus. Component of the Mediator complex, a coactivator involved in the regulated transcription of nearly all RNA polymerase II-dependent genes. Mediator functions as a bridge to convey information from gene-specific regulatory proteins to the basal RNA polymerase II transcription machinery. Mediator is recruited to promoters by direct interactions with regulatory proteins and serves as a scaffold for the assembly of a functional preinitiation complex with RNA polymerase II and the general transcription factors. This is Mediator of RNA polymerase II transcription subunit 9 (med9) from Xenopus laevis (African clawed frog).